The following is a 245-amino-acid chain: Small ribosomal subunit protein uS2 (245 aa).

Belongs to the universal ribosomal protein uS2 family.

The polypeptide is Small ribosomal subunit protein uS2 (Pseudomonas fluorescens (strain Pf0-1)).